Reading from the N-terminus, the 974-residue chain is Ephrin type-B receptor 3 (974 aa).

Positions 1 to 16 (MLPAVFVILALSAVQG) are cleaved as a signal peptide. At 17–534 (LEETLMDTKW…RSSLQEQVPM (518 aa)) the chain is on the extracellular side. One can recognise an Eph LBD domain in the interval 18-196 (EETLMDTKWT…FFKKCPRTTA (179 aa)). An intrachain disulfide couples Cys60 to Cys178. Fibronectin type-III domains are found at residues 318-426 (VPSA…TNQA) and 427-522 (APSS…IAED). N-linked (GlcNAc...) asparagine glycans are attached at residues Asn330 and Asn420. The helical transmembrane segment at 535–555 (VVGSVTAGLIFIIAVVIIVIV) threads the bilayer. Over 556-974 (CFSRKQRNDS…QMSQTLPVQV (419 aa)) the chain is Cytoplasmic. Tyr590 carries the post-translational modification Phosphotyrosine; by autocatalysis. One can recognise a Protein kinase domain in the interval 609-872 (VKIEEVIGAG…QIVSSLDKLI (264 aa)). Residues 615 to 623 (IGAGEFGEV) and Lys641 each bind ATP. Asp734 serves as the catalytic Proton acceptor. The SAM domain maps to 901 to 965 (TTFPTVSDWL…LNSVQDMRLQ (65 aa)). The PDZ-binding motif lies at 972–974 (VQV).

This sequence belongs to the protein kinase superfamily. Tyr protein kinase family. Ephrin receptor subfamily. As to quaternary structure, heterotetramer upon binding of the ligand. The heterotetramer is composed of an ephrin dimer and a receptor dimer. Oligomerization is probably required to induce biological responses. In terms of processing, phosphorylated. Autophosphorylates upon ligand-binding. Autophosphorylation on Tyr-590 is required for interaction with SH2 domain-containing proteins. As to expression, expressed in the embryo in pre-somitic mesoderm, caudal somites, midbrain, and cement gland. Most abundant in adult brain, eye, heart, lung and ovary. Lower levels in intestine, kidney, oviduct and pharynx.

The protein resides in the cell membrane. It is found in the cell projection. The protein localises to the dendrite. It carries out the reaction L-tyrosyl-[protein] + ATP = O-phospho-L-tyrosyl-[protein] + ADP + H(+). In terms of biological role, receptor tyrosine kinase which binds promiscuously transmembrane ephrin-B family ligands residing on adjacent cells, leading to contact-dependent bidirectional signaling into neighboring cells. The signaling pathway downstream of the receptor is referred to as forward signaling while the signaling pathway downstream of the ephrin ligand is referred to as reverse signaling. Generally has an overlapping and redundant function with EPHB2. Like EPHB2, functions in axon guidance during development. In addition to its role in axon guidance also plays an important redundant role with other ephrin-B receptors in development and maturation of dendritic spines and the formation of excitatory synapses. May control other aspects of development through regulation of cell migration and positioning. This Xenopus laevis (African clawed frog) protein is Ephrin type-B receptor 3 (ephb3).